Reading from the N-terminus, the 221-residue chain is Interleukin-12 subunit alpha (221 aa).

Residues 1 to 25 (MCPLRSLLLLSTLVLLHHLPHLSLG) form the signal peptide. 3 cysteine pairs are disulfide-bonded: Cys-39-Cys-112, Cys-66-Cys-198, and Cys-87-Cys-125. N-linked (GlcNAc...) asparagine glycosylation is found at Asn-41 and Asn-95.

It belongs to the IL-6 superfamily. In terms of assembly, heterodimer with IL12B; disulfide-linked. This heterodimer is known as interleukin IL-12. Heterodimer with EBI3/IL27B; not disulfide-linked. This heterodimer is known as interleukin IL-35. Interacts with NBR1; this interaction promotes IL-12 secretion.

The protein resides in the secreted. In terms of biological role, heterodimerizes with IL12B to form the IL-12 cytokine or with EBI3/IL27B to form the IL-35 cytokine. IL-12 is primarily produced by professional antigen-presenting cells (APCs) such as B-cells and dendritic cells (DCs) as well as macrophages and granulocytes and regulates T-cell and natural killer-cell responses, induces the production of interferon-gamma (IFN-gamma), favors the differentiation of T-helper 1 (Th1) cells and is an important link between innate resistance and adaptive immunity. Mechanistically, exerts its biological effects through a receptor composed of IL12R1 and IL12R2 subunits. Binding to the receptor results in the rapid tyrosine phosphorylation of a number of cellular substrates including the JAK family kinases TYK2 and JAK2. In turn, recruited STAT4 gets phosphorylated and translocates to the nucleus where it regulates cytokine/growth factor responsive genes. As part of IL-35, plays essential roles in maintaining the immune homeostasis of the liver microenvironment and also functions as an immune-suppressive cytokine. Mediates biological events through unconventional receptors composed of IL12RB2 and gp130/IL6ST heterodimers or homodimers. Signaling requires the transcription factors STAT1 and STAT4, which form a unique heterodimer that binds to distinct DNA sites. The polypeptide is Interleukin-12 subunit alpha (IL12A) (Cervus elaphus (Red deer)).